A 159-amino-acid chain; its full sequence is Endoribonuclease YbeY (159 aa).

Histidine 119, histidine 123, and histidine 129 together coordinate Zn(2+).

The protein belongs to the endoribonuclease YbeY family. It depends on Zn(2+) as a cofactor.

The protein resides in the cytoplasm. Its function is as follows. Single strand-specific metallo-endoribonuclease involved in late-stage 70S ribosome quality control and in maturation of the 3' terminus of the 16S rRNA. The sequence is that of Endoribonuclease YbeY from Acinetobacter baylyi (strain ATCC 33305 / BD413 / ADP1).